The chain runs to 196 residues: ATP-dependent Clp protease proteolytic subunit (196 aa).

Ser-96 serves as the catalytic Nucleophile. Residue His-121 is part of the active site.

This sequence belongs to the peptidase S14 family. In terms of assembly, fourteen ClpP subunits assemble into 2 heptameric rings which stack back to back to give a disk-like structure with a central cavity, resembling the structure of eukaryotic proteasomes.

It localises to the cytoplasm. It catalyses the reaction Hydrolysis of proteins to small peptides in the presence of ATP and magnesium. alpha-casein is the usual test substrate. In the absence of ATP, only oligopeptides shorter than five residues are hydrolyzed (such as succinyl-Leu-Tyr-|-NHMec, and Leu-Tyr-Leu-|-Tyr-Trp, in which cleavage of the -Tyr-|-Leu- and -Tyr-|-Trp bonds also occurs).. Functionally, cleaves peptides in various proteins in a process that requires ATP hydrolysis. Has a chymotrypsin-like activity. Plays a major role in the degradation of misfolded proteins. The protein is ATP-dependent Clp protease proteolytic subunit of Streptococcus equi subsp. zooepidemicus (strain H70).